The sequence spans 93 residues: UPF0358 protein lwe1048 (93 aa).

This sequence belongs to the UPF0358 family.

The polypeptide is UPF0358 protein lwe1048 (Listeria welshimeri serovar 6b (strain ATCC 35897 / DSM 20650 / CCUG 15529 / CIP 8149 / NCTC 11857 / SLCC 5334 / V8)).